Reading from the N-terminus, the 259-residue chain is Thiazole synthase (259 aa).

Residue lysine 95 is the Schiff-base intermediate with DXP of the active site. 1-deoxy-D-xylulose 5-phosphate-binding positions include glycine 156, 182 to 183, and 204 to 205; these read AG and NT.

Belongs to the ThiG family. Homotetramer. Forms heterodimers with either ThiH or ThiS.

It localises to the cytoplasm. The catalysed reaction is [ThiS sulfur-carrier protein]-C-terminal-Gly-aminoethanethioate + 2-iminoacetate + 1-deoxy-D-xylulose 5-phosphate = [ThiS sulfur-carrier protein]-C-terminal Gly-Gly + 2-[(2R,5Z)-2-carboxy-4-methylthiazol-5(2H)-ylidene]ethyl phosphate + 2 H2O + H(+). Its pathway is cofactor biosynthesis; thiamine diphosphate biosynthesis. In terms of biological role, catalyzes the rearrangement of 1-deoxy-D-xylulose 5-phosphate (DXP) to produce the thiazole phosphate moiety of thiamine. Sulfur is provided by the thiocarboxylate moiety of the carrier protein ThiS. In vitro, sulfur can be provided by H(2)S. The chain is Thiazole synthase from Proteus mirabilis (strain HI4320).